A 254-amino-acid chain; its full sequence is Major prion protein (254 aa).

The N-terminal stretch at 1-22 is a signal peptide; the sequence is MANLGYWLLALFVTMWTDVGLC. Residues 23-38 are interaction with ADGRG6; sequence KKRPKPGGWNTGGSRY. The segment at 23 to 231 is interaction with GRB2, ERI3 and SYN1; sequence KKRPKPGGWN…QAYYDGRRSS (209 aa). Positions 25-104 are disordered; the sequence is RPKPGGWNTG…HNQWNKPSKP (80 aa). At Pro-44 the chain carries Hydroxyproline. A run of 5 repeats spans residues 51-58, 59-66, 67-74, 75-82, and 83-90. The interval 51–90 is 5 X 8 AA tandem repeats of P-H-G-G-G-W-G-Q; the sequence is PQGGTWGQPHGGGWGQPHGGSWGQPHGGSWGQPHGGGWGQ. A compositionally biased stretch (gly residues) spans 54–94; sequence GTWGQPHGGGWGQPHGGSWGQPHGGSWGQPHGGGWGQGGGT. Residues His-60, Gly-61, Gly-62, His-68, Gly-69, Gly-70, His-76, Gly-77, Gly-78, His-84, Gly-85, and Gly-86 each coordinate Cu(2+). An intrachain disulfide couples Cys-178 to Cys-213. Asn-180 and Asn-196 each carry an N-linked (GlcNAc...) asparagine glycan. Ser-230 is lipidated: GPI-anchor amidated serine. Positions 231–254 are cleaved as a propeptide — removed in mature form; that stretch reads SSTVLFSSPPVILLISFLIFLIVG.

It belongs to the prion family. In terms of assembly, monomer and homodimer. Has a tendency to aggregate into amyloid fibrils containing a cross-beta spine, formed by a steric zipper of superposed beta-strands. Soluble oligomers may represent an intermediate stage on the path to fibril formation. Copper binding may promote oligomerization. Interacts with GRB2, APP, ERI3/PRNPIP and SYN1. Mislocalized cytosolically exposed PrP interacts with MGRN1; this interaction alters MGRN1 subcellular location and causes lysosomal enlargement. Interacts with APP. Interacts with KIAA1191. Interacts with ADGRG6. Post-translationally, N-glycosylated. In terms of tissue distribution, highly expressed in the brain, lung, kidney and heart. Expressed at low levels in the liver and spleen.

The protein localises to the cell membrane. It localises to the golgi apparatus. In terms of biological role, its primary physiological function is unclear. May play a role in neuronal development and synaptic plasticity. May be required for neuronal myelin sheath maintenance. May promote myelin homeostasis through acting as an agonist for ADGRG6 receptor. May play a role in iron uptake and iron homeostasis. Soluble oligomers are toxic to cultured neuroblastoma cells and induce apoptosis (in vitro). Association with GPC1 (via its heparan sulfate chains) targets PRNP to lipid rafts. Also provides Cu(2+) or Zn(2+) for the ascorbate-mediated GPC1 deaminase degradation of its heparan sulfate side chains. This chain is Major prion protein (Prnp), found in Mus musculus (Mouse).